We begin with the raw amino-acid sequence, 510 residues long: Laccase (510 aa).

4 consecutive Plastocyanin-like domains span residues P45 to K79, K99 to D174, Y242 to K317, and L372 to M506. The Cu cation site is built by H103, H105, H151, and H153. Positions 419, 422, 424, 491, 492, 493, 497, and 502 each coordinate Cu cation.

Belongs to the multicopper oxidase family. It depends on Cu(2+) as a cofactor.

The catalysed reaction is 4 hydroquinone + O2 = 4 benzosemiquinone + 2 H2O. Its activity is regulated as follows. Resistant to alkali and organic solvents such as methanol, ethanol and acetone. Resistant to EDTA, which might be explained by the spatial protection of copper ions in the active sites. Inhibited by DMSO. Strongly inhibited by Fe(2+) and DTT. Functionally, multicopper oxidase that catalyzes the oxidation of a variety of substrates, including phenolic and non-phenolic compounds. Substrates include 2,6-dimethoxyphenol (2,6-DMP) and the non-phenolic compound 2,2'-azino-bis(3-ethylbenzothiazoline-6-sulfonic acid) (ABTS). Cannot use guaiacol and catechol. In Bacillus stratosphericus, this protein is Laccase.